A 221-amino-acid polypeptide reads, in one-letter code: Glutathione S-transferase (221 aa).

The region spanning 3–83 is the GST N-terminal domain; it reads GKPVLHYANT…YIAGKYNLYG (81 aa). Glutathione-binding positions include Y9, K45, 54–55, and 67–68; these read QV and QT. The GST C-terminal domain occupies 85 to 208; it reads DLKERALIDM…QPGSQRKPRL (124 aa).

It belongs to the GST superfamily. Alpha family. As to quaternary structure, homodimer or heterodimer of GSTA1 and GSTA2.

It catalyses the reaction RX + glutathione = an S-substituted glutathione + a halide anion + H(+). It carries out the reaction prostaglandin A2 + glutathione = prostaglandin A2-S-(R)-glutathione. The catalysed reaction is prostaglandin J2 + glutathione = prostaglandin J2-S-(R)-glutathione. The enzyme catalyses (13S)-hydroperoxy-(9Z,11E)-octadecadienoate + 2 glutathione = (13S)-hydroxy-(9Z,11E)-octadecadienoate + glutathione disulfide + H2O. It catalyses the reaction androst-5-ene-3,17-dione = androst-4-ene-3,17-dione. In terms of biological role, glutathione S-transferase that catalyzes the nucleophilic attack of the sulfur atom of glutathione on the electrophilic groups of a wide range of exogenous and endogenous compounds. Involved in the formation of glutathione conjugates of both prostaglandin A2 (PGA2) and prostaglandin J2 (PGJ2). It also catalyzes the isomerization of D5-androstene-3,17-dione (AD) into D4-androstene-3,17-dione and may therefore play an important role in hormone biosynthesis. Through its glutathione-dependent peroxidase activity toward the fatty acid hydroperoxide (13S)-hydroperoxy-(9Z,11E)-octadecadienoate/13-HPODE it is also involved in the metabolism of oxidized linoleic acid. The polypeptide is Glutathione S-transferase (Gallus gallus (Chicken)).